The following is a 290-amino-acid chain: Ciliary microtubule inner protein 6 (290 aa).

A disordered region spans residues 76–112; it reads ENQGDWWPHGKGLENPFQPPYDTKSTQRSDFKKPTCP. Mn stretches follow at residues 128–160 and 213–246; these read GIVP…ARKT and SAES…IRVA. A disordered region spans residues 197 to 228; it reads SGSCSSEQSKKTEKGNSAESKMISPGLCRQNS.

It localises to the cell projection. Its subcellular location is the cilium. This is Ciliary microtubule inner protein 6 (CIMIP6) from Bos taurus (Bovine).